A 341-amino-acid polypeptide reads, in one-letter code: Outer membrane protein assembly factor BamD (341 aa).

Positions Met1–Ala17 are cleaved as a signal peptide. Cys18 is lipidated: N-palmitoyl cysteine. Residue Cys18 is the site of S-diacylglycerol cysteine attachment. The segment covering Asp289–Asp316 has biased composition (basic and acidic residues). Positions Asp289 to Ser330 are disordered. Residues Glu317–Asp326 show a composition bias toward acidic residues.

The protein belongs to the BamD family. As to quaternary structure, part of the Bam complex.

Its subcellular location is the cell outer membrane. Its function is as follows. Part of the outer membrane protein assembly complex, which is involved in assembly and insertion of beta-barrel proteins into the outer membrane. This is Outer membrane protein assembly factor BamD from Pseudomonas aeruginosa (strain ATCC 15692 / DSM 22644 / CIP 104116 / JCM 14847 / LMG 12228 / 1C / PRS 101 / PAO1).